Reading from the N-terminus, the 214-residue chain is Exosome complex component RRP46 homolog (214 aa).

The protein belongs to the RNase PH family. As to quaternary structure, homodimer. Component of the RNA exosome complex. Interacts with crn-4; interaction promotes the DNase activity of crn-4. Interacts with crn-3, cps-6 and cyn-13.

It localises to the cytoplasm. The protein resides in the nucleus. Its function is as follows. Non-catalytic component of the RNA exosome complex which has 3'-&gt;5' exoribonuclease activity and participates in a multitude of cellular RNA processing and degradation events. Involved in apoptotic DNA degradation. In vitro, does not bind or digest single-stranded RNA. In vitro, binds to double-stranded DNA without detectable DNase activity. In Caenorhabditis elegans, this protein is Exosome complex component RRP46 homolog.